The primary structure comprises 39 residues: Histone H2A (39 aa).

A compositionally biased stretch (basic residues) spans 1–18 (AGRGKQGGKVRAKAKTRS). The segment at 1-24 (AGRGKQGGKVRAKAKTRSSRAGLQ) is disordered. At K5 the chain carries N6-(2-hydroxyisobutyryl)lysine. Position 5 is an N6-acetyllysine (K5). K9 carries the post-translational modification N6-(2-hydroxyisobutyryl)lysine; alternate. At K9 the chain carries N6-lactoyllysine; alternate. An N6-succinyllysine modification is found at K9. Glycyl lysine isopeptide (Lys-Gly) (interchain with G-Cter in ubiquitin) cross-links involve residues K13 and K15. Residue K36 is modified to N6-(2-hydroxyisobutyryl)lysine; alternate.

The protein belongs to the histone H2A family. The nucleosome is a histone octamer containing two molecules each of H2A, H2B, H3 and H4 assembled in one H3-H4 heterotetramer and two H2A-H2B heterodimers. The octamer wraps approximately 147 bp of DNA. Monoubiquitination of C-terminus gives a specific tag for epigenetic transcriptional repression. Following DNA double-strand breaks (DSBs), it is ubiquitinated through 'Lys-63' linkage of ubiquitin moieties.

It is found in the nucleus. The protein resides in the chromosome. Core component of nucleosome. Nucleosomes wrap and compact DNA into chromatin, limiting DNA accessibility to the cellular machineries which require DNA as a template. Histones thereby play a central role in transcription regulation, DNA repair, DNA replication and chromosomal stability. DNA accessibility is regulated via a complex set of post-translational modifications of histones, also called histone code, and nucleosome remodeling. Its function is as follows. Buforins are strong antimicrobial activities in vitro against a broad-spectrum of microorganisms including fungi. Buforin II is more potent than buforin I. The protein is Histone H2A of Bufo gargarizans (Asian toad).